Consider the following 373-residue polypeptide: Queuine tRNA-ribosyltransferase (373 aa).

The active-site Proton acceptor is Asp91. Residues 91 to 95 (DSGGF), Asp145, and Gln187 each bind substrate. The tract at residues 245 to 251 (GVGTPED) is RNA binding. Catalysis depends on Asp264, which acts as the Nucleophile. An RNA binding; important for wobble base 34 recognition region spans residues 269-273 (TRNAR). 4 residues coordinate Zn(2+): Cys302, Cys304, Cys307, and His333.

This sequence belongs to the queuine tRNA-ribosyltransferase family. Homodimer. Within each dimer, one monomer is responsible for RNA recognition and catalysis, while the other monomer binds to the replacement base PreQ1. Zn(2+) is required as a cofactor.

The catalysed reaction is 7-aminomethyl-7-carbaguanine + guanosine(34) in tRNA = 7-aminomethyl-7-carbaguanosine(34) in tRNA + guanine. It functions in the pathway tRNA modification; tRNA-queuosine biosynthesis. Its function is as follows. Catalyzes the base-exchange of a guanine (G) residue with the queuine precursor 7-aminomethyl-7-deazaguanine (PreQ1) at position 34 (anticodon wobble position) in tRNAs with GU(N) anticodons (tRNA-Asp, -Asn, -His and -Tyr). Catalysis occurs through a double-displacement mechanism. The nucleophile active site attacks the C1' of nucleotide 34 to detach the guanine base from the RNA, forming a covalent enzyme-RNA intermediate. The proton acceptor active site deprotonates the incoming PreQ1, allowing a nucleophilic attack on the C1' of the ribose to form the product. After dissociation, two additional enzymatic reactions on the tRNA convert PreQ1 to queuine (Q), resulting in the hypermodified nucleoside queuosine (7-(((4,5-cis-dihydroxy-2-cyclopenten-1-yl)amino)methyl)-7-deazaguanosine). The protein is Queuine tRNA-ribosyltransferase of Syntrophobacter fumaroxidans (strain DSM 10017 / MPOB).